The chain runs to 251 residues: uncharacterized protein (251 aa).

12–21 (TGASSQGDIG) is a binding site for NADP(+). S148 is a substrate binding site. Catalysis depends on Y161, which acts as the Proton acceptor.

Belongs to the short-chain dehydrogenases/reductases (SDR) family.

This is an uncharacterized protein from Bacillus subtilis (strain 168).